Here is a 358-residue protein sequence, read N- to C-terminus: MPRIQVLDIRGSKESVGSTPHLRAAILEGLLKPPGSRTLPSETLYDEVGLKMYNDGMKAWAEWYYPVEAERQILERYGRDIAKLFTTSAKGKAVLIELGAGSLDKTSQVLLSAAEITRTTGPMNNIAYYALDLERGELERTIGRLQEVIGDQIAGKISTAGMWGTYDDGIRVIEKNELELEPDIPVHILFLGGTIGNFSKQDGDVAFLKSLPLDHKRGDTLLVGMDRHKSADAIERSYGFAAAKDWIMNGLKVSGRVLTGDEGLFEIGNWERYAKYNEELGRYEAGYKSQKEHALKISEGVDITFLKDEVVLVMFSNKYTDAEMDSVVDSAGLVKNGSWMDEKAQYCLLSLRANNGPV.

This sequence belongs to the methyltransferase superfamily.

The enzyme catalyses L-tryptophan + S-adenosyl-L-methionine = N(alpha)-methyl-L-tryptophan + S-adenosyl-L-homocysteine + H(+). The catalysed reaction is N(alpha)-methyl-L-tryptophan + S-adenosyl-L-methionine = N(alpha),N(alpha)-dimethyl-L-tryptophan + S-adenosyl-L-homocysteine + H(+). It carries out the reaction N(alpha),N(alpha)-dimethyl-L-tryptophan + S-adenosyl-L-methionine = N(alpha),N(alpha),N(alpha)-trimethyl-L-tryptophan + S-adenosyl-L-homocysteine + H(+). Functionally, methyltransferase that catalyzes iterative L-tryptophan N-methylations to produce L-abrine (N-alpha-methyl-L-tryptophan) and N,N-alpha-dimethyl-L-tryptophan. Also catalyzes a third methylation to yield L-hypaphorine (N,N,N-alpha-trimethyl-L-tryptopan), an agonist of the phytohormone indole-3-acetic acid. Can also N-methylate the non-native amino acid substrate 4-hydroxytryptophan, but the ability to incorporate trpM into a functional psilocybin biosynthesis pathway is indeed thwarted by the inability of the L-tryptophan decarboxylase psiD to use N,N-dimethyl-4-hydroxytryptophan as substrate. This is L-tryptophan methyltransferase trpM from Psilocybe serbica.